We begin with the raw amino-acid sequence, 209 residues long: Octanoyltransferase (209 aa).

The BPL/LPL catalytic domain occupies 30–209 (DHEPEIIYLV…IQTEFNKIFK (180 aa)). Residues 69–76 (RGGKFTFH), 143–145 (AIG), and 156–158 (GVA) each bind substrate. C174 serves as the catalytic Acyl-thioester intermediate.

It belongs to the LipB family.

The protein resides in the cytoplasm. It carries out the reaction octanoyl-[ACP] + L-lysyl-[protein] = N(6)-octanoyl-L-lysyl-[protein] + holo-[ACP] + H(+). Its pathway is protein modification; protein lipoylation via endogenous pathway; protein N(6)-(lipoyl)lysine from octanoyl-[acyl-carrier-protein]: step 1/2. Its function is as follows. Catalyzes the transfer of endogenously produced octanoic acid from octanoyl-acyl-carrier-protein onto the lipoyl domains of lipoate-dependent enzymes. Lipoyl-ACP can also act as a substrate although octanoyl-ACP is likely to be the physiological substrate. The sequence is that of Octanoyltransferase from Rickettsia rickettsii (strain Iowa).